Reading from the N-terminus, the 203-residue chain is Imidazoleglycerol-phosphate dehydratase (203 aa).

Positions 184–203 (DPRRSSQIPSSKGVLEQAGQ) are disordered.

Belongs to the imidazoleglycerol-phosphate dehydratase family.

The protein localises to the cytoplasm. It carries out the reaction D-erythro-1-(imidazol-4-yl)glycerol 3-phosphate = 3-(imidazol-4-yl)-2-oxopropyl phosphate + H2O. It participates in amino-acid biosynthesis; L-histidine biosynthesis; L-histidine from 5-phospho-alpha-D-ribose 1-diphosphate: step 6/9. The sequence is that of Imidazoleglycerol-phosphate dehydratase from Prochlorococcus marinus (strain NATL1A).